The chain runs to 467 residues: Light-independent protochlorophyllide reductase subunit N (467 aa).

Residues Cys22, Cys47, and Cys107 each contribute to the [4Fe-4S] cluster site.

Belongs to the BchN/ChlN family. As to quaternary structure, protochlorophyllide reductase is composed of three subunits; ChlL, ChlN and ChlB. Forms a heterotetramer of two ChlB and two ChlN subunits. [4Fe-4S] cluster is required as a cofactor.

It is found in the plastid. Its subcellular location is the chloroplast. It carries out the reaction chlorophyllide a + oxidized 2[4Fe-4S]-[ferredoxin] + 2 ADP + 2 phosphate = protochlorophyllide a + reduced 2[4Fe-4S]-[ferredoxin] + 2 ATP + 2 H2O. It functions in the pathway porphyrin-containing compound metabolism; chlorophyll biosynthesis (light-independent). Its function is as follows. Component of the dark-operative protochlorophyllide reductase (DPOR) that uses Mg-ATP and reduced ferredoxin to reduce ring D of protochlorophyllide (Pchlide) to form chlorophyllide a (Chlide). This reaction is light-independent. The NB-protein (ChlN-ChlB) is the catalytic component of the complex. In Chara vulgaris (Common stonewort), this protein is Light-independent protochlorophyllide reductase subunit N.